A 495-amino-acid polypeptide reads, in one-letter code: MEEESIKEGSEKPRGARTADKAGWIKKSSGGLLGLWKDRYLLLCQAQLLVYENEDEQKCVETVELGSYEKCQDLRTLLKRKHHRFILLRSPGNKVSDIKFQAPSGEEKESWIKALNEGINRGKNKAFDEVKVDKTCALEHVTRNRVRGGQRRRPPTRIHLKEVASAASDGLSRLDLDVPDSGPPVFAPLSDISEDQPQEPPRALMPPVKPSPGPETSAVEDSKETPAGERALTPDSASSGANPESQEDAETPAKEDSDVKSLPNSTLSEKLKVSWENPSPEKPSAPESAQLSSSETPEATPRESKKPPAPPPKILSEKMKACMSGVDASGSSQSSEAPETTSPEPTQVSVNGMDDGPESALQAMGIPGPAPEDAAASPALPFSDLPSQFHPRSSSLGDLLRESPQHPRLPKEKLYRAQLEVKVASKQTEKLLNQVLGSEPPPVCAESLLSQAVEQLRQATQVLQEMRDLGELNQETPGLVQKRKELVTLYRRSAP.

The region spanning 18–120 is the PH domain; that stretch reads TADKAGWIKK…WIKALNEGIN (103 aa). Ser-165 and Ser-168 each carry phosphoserine. The interval 171–411 is disordered; it reads LSRLDLDVPD…ESPQHPRLPK (241 aa). A compositionally biased stretch (pro residues) spans 198–213; sequence QEPPRALMPPVKPSPG. The residue at position 233 (Thr-233) is a Phosphothreonine. Positions 235 to 244 are enriched in polar residues; that stretch reads DSASSGANPE. A phosphoserine mark is found at Ser-236, Ser-238, Ser-239, Ser-274, and Ser-292. Thr-296 is modified (phosphothreonine). Residues 324 to 335 show a composition bias toward low complexity; it reads SGVDASGSSQSS. Residues 336-350 show a composition bias toward polar residues; the sequence is EAPETTSPEPTQVSV. Ser-395 is modified (phosphoserine). Over residues 399–411 the composition is skewed to basic and acidic residues; that stretch reads LLRESPQHPRLPK. Residues 444–469 adopt a coiled-coil conformation; the sequence is CAESLLSQAVEQLRQATQVLQEMRDL.

The protein is Pleckstrin homology domain-containing family O member 2 (Plekho2) of Mus musculus (Mouse).